The following is a 511-amino-acid chain: Small ribosomal subunit protein uS4m (511 aa).

Residues 202–272 (KRLDVVLYRS…IKNNLFSNIN (71 aa)) form the S4 RNA-binding domain.

The protein belongs to the universal ribosomal protein uS4 family.

The protein localises to the mitochondrion. The protein is Small ribosomal subunit protein uS4m (RPS4) of Prototheca wickerhamii.